The chain runs to 394 residues: Elongation factor Tu (394 aa).

The region spanning lysine 10–valine 204 is the tr-type G domain. The segment at glycine 19–threonine 26 is G1. Glycine 19 to threonine 26 contacts GTP. Threonine 26 contacts Mg(2+). Residues glycine 60 to serine 64 form a G2 region. Residues aspartate 81–glycine 84 form a G3 region. GTP contacts are provided by residues aspartate 81–histidine 85 and asparagine 136–aspartate 139. A G4 region spans residues asparagine 136–aspartate 139. The tract at residues serine 174–leucine 176 is G5.

It belongs to the TRAFAC class translation factor GTPase superfamily. Classic translation factor GTPase family. EF-Tu/EF-1A subfamily. In terms of assembly, monomer.

Its subcellular location is the cytoplasm. It carries out the reaction GTP + H2O = GDP + phosphate + H(+). GTP hydrolase that promotes the GTP-dependent binding of aminoacyl-tRNA to the A-site of ribosomes during protein biosynthesis. The polypeptide is Elongation factor Tu (Rickettsia massiliae (strain Mtu5)).